A 210-amino-acid polypeptide reads, in one-letter code: Thymidylate kinase (210 aa).

10–17 (GIDGCGKT) serves as a coordination point for ATP.

This sequence belongs to the thymidylate kinase family.

The enzyme catalyses dTMP + ATP = dTDP + ADP. Its function is as follows. Phosphorylation of dTMP to form dTDP in both de novo and salvage pathways of dTTP synthesis. The polypeptide is Thymidylate kinase (Prochlorococcus marinus (strain MIT 9515)).